The sequence spans 780 residues: ATP-dependent DNA helicase RecG (780 aa).

3 domain regions span residues 1-350, 351-549, and 550-780; these read MLCS…GGIP, KKIE…EMPP, and GRKE…IEVG. Residues 154-252 are wedge domain; it reads RKIFKLNDLL…VTPKEGEYVR (99 aa). ATP is bound by residues F367, L369, G399, S400, G401, K402, T403, and R436. The region spanning 383–544 is the Helicase ATP-binding domain; that stretch reads DMISEKPMNR…FYGDLDVTVI (162 aa). The short motif at 497–500 is the DEAH box element; that stretch reads DEQH. Residues 563 to 728 form the Helicase C-terminal domain; that stretch reads RVNEVYEFVR…EYDLKTRGPG (166 aa).

The protein belongs to the helicase family. RecG subfamily. As to quaternary structure, monomer.

The enzyme catalyses Couples ATP hydrolysis with the unwinding of duplex DNA by translocating in the 3'-5' direction.. It carries out the reaction ATP + H2O = ADP + phosphate + H(+). Functionally, plays a critical role in recombination and DNA repair. Helps process Holliday junction intermediates to mature products by catalyzing branch migration. Has replication fork (Y-DNA) regression activity, unwinds stalled or blocked replication forks to make a HJ that can be resolved. Has a DNA unwinding activity characteristic of a DNA helicase with 3'-5' polarity. Might be a DNA translocase rather than a bona fide helicase. The polypeptide is ATP-dependent DNA helicase RecG (Thermotoga maritima (strain ATCC 43589 / DSM 3109 / JCM 10099 / NBRC 100826 / MSB8)).